We begin with the raw amino-acid sequence, 498 residues long: Lysine--tRNA ligase (498 aa).

2 residues coordinate Mg(2+): Glu-401 and Glu-408.

The protein belongs to the class-II aminoacyl-tRNA synthetase family. As to quaternary structure, homodimer. It depends on Mg(2+) as a cofactor.

It is found in the cytoplasm. It catalyses the reaction tRNA(Lys) + L-lysine + ATP = L-lysyl-tRNA(Lys) + AMP + diphosphate. The chain is Lysine--tRNA ligase from Dehalococcoides mccartyi (strain ATCC BAA-2100 / JCM 16839 / KCTC 5957 / BAV1).